The chain runs to 359 residues: Heat-inducible transcription repressor HrcA (359 aa).

Belongs to the HrcA family.

Functionally, negative regulator of class I heat shock genes (grpE-dnaK-dnaJ and groELS operons). Prevents heat-shock induction of these operons. This is Heat-inducible transcription repressor HrcA from Sinorhizobium fredii (strain NBRC 101917 / NGR234).